Consider the following 198-residue polypeptide: Probable chemoreceptor glutamine deamidase CheD (198 aa).

It belongs to the CheD family.

It catalyses the reaction L-glutaminyl-[protein] + H2O = L-glutamyl-[protein] + NH4(+). In terms of biological role, probably deamidates glutamine residues to glutamate on methyl-accepting chemotaxis receptors (MCPs), playing an important role in chemotaxis. In Xanthomonas campestris pv. campestris (strain 8004), this protein is Probable chemoreceptor glutamine deamidase CheD.